Consider the following 455-residue polypeptide: UDP-N-acetylmuramoylalanine--D-glutamate ligase (455 aa).

ATP is bound at residue 119-125 (GTNGKTT).

The protein belongs to the MurCDEF family.

The protein localises to the cytoplasm. It carries out the reaction UDP-N-acetyl-alpha-D-muramoyl-L-alanine + D-glutamate + ATP = UDP-N-acetyl-alpha-D-muramoyl-L-alanyl-D-glutamate + ADP + phosphate + H(+). It functions in the pathway cell wall biogenesis; peptidoglycan biosynthesis. Cell wall formation. Catalyzes the addition of glutamate to the nucleotide precursor UDP-N-acetylmuramoyl-L-alanine (UMA). The protein is UDP-N-acetylmuramoylalanine--D-glutamate ligase of Listeria monocytogenes serotype 4b (strain F2365).